The sequence spans 131 residues: Transcription antitermination protein NusB (131 aa).

Belongs to the NusB family.

Its function is as follows. Involved in transcription antitermination. Required for transcription of ribosomal RNA (rRNA) genes. Binds specifically to the boxA antiterminator sequence of the ribosomal RNA (rrn) operons. This is Transcription antitermination protein NusB from Ligilactobacillus salivarius (strain UCC118) (Lactobacillus salivarius).